Consider the following 230-residue polypeptide: Ureidoacrylate amidohydrolase RutB (230 aa).

Asp-24 functions as the Proton acceptor in the catalytic mechanism. Residue Lys-133 is part of the active site. The active-site Nucleophile is the Cys-166.

This sequence belongs to the isochorismatase family. RutB subfamily.

The catalysed reaction is (Z)-3-ureidoacrylate + H2O + H(+) = (Z)-3-aminoacrylate + NH4(+) + CO2. The enzyme catalyses (Z)-3-ureidoacrylate + H2O = (Z)-3-aminoacrylate + carbamate + H(+). It catalyses the reaction (Z)-2-methylureidoacrylate + H2O + H(+) = (Z)-2-methylaminoacrylate + NH4(+) + CO2. Hydrolyzes ureidoacrylate to form aminoacrylate and carbamate. The carbamate hydrolyzes spontaneously, thereby releasing one of the nitrogen atoms of the pyrimidine ring as ammonia and one of its carbon atoms as CO2. The sequence is that of Ureidoacrylate amidohydrolase RutB from Escherichia coli O157:H7.